A 444-amino-acid chain; its full sequence is CBL-interacting serine/threonine-protein kinase 1 (444 aa).

In terms of domain architecture, Protein kinase spans Tyr20–Phe275. Residues Leu26–Val34 and Lys49 each bind ATP. Asp143 (proton acceptor) is an active-site residue. The segment at Asp161–Glu190 is activation loop. At Ser165 the chain carries Phosphoserine. Thr179 bears the Phosphothreonine mark. The NAF domain occupies Asp313–Glu337. Residues Glu343–Val372 form a PPI region.

It belongs to the protein kinase superfamily. CAMK Ser/Thr protein kinase family. SNF1 subfamily. As to quaternary structure, interacts with CBL1. Interacts with CBL2. Interacts with CBL3. Interacts with CBL9. Interacts with ECT1 and ECT2. Mn(2+) serves as cofactor. Autophosphorylated. As to expression, ubiquitous.

It carries out the reaction L-seryl-[protein] + ATP = O-phospho-L-seryl-[protein] + ADP + H(+). The enzyme catalyses L-threonyl-[protein] + ATP = O-phospho-L-threonyl-[protein] + ADP + H(+). Functionally, CIPK serine-threonine protein kinases interact with CBL proteins. Binding of a CBL protein to the regulatory NAF domain of CIPK protein lead to the activation of the kinase in a calcium-dependent manner. In Arabidopsis thaliana (Mouse-ear cress), this protein is CBL-interacting serine/threonine-protein kinase 1 (CIPK1).